The sequence spans 539 residues: MAESPGCCSVWARCLHCLYSCHWRKCPRERMQTSKCDCIWFGLLFLTFLLSLSWLYIGLVLLNDLHNFNEFLFRRWGHWMDWSLAFLLVISLLVTYASLLLVLALLLRLCRQPLHLHSLHKVLLLLIMLLVAAGLVGLDIQWQQEWHSLRVSLQATAPFLHIGAAAGIALLAWPVADTFYRIHRRGPKILLLLLFFGVVLVIYLAPLCISSPCIMEPRDLPPKPGLVGHRGAPMLAPENTLMSLRKTAECGATVFETDVMVSSDGVPFLMHDEHLSRTTNVASVFPTRITAHSSDFSWTELKRLNAGSWFLERRPFWGAKPLAGPDQKEAESQTVPALEELLEEAAALNLSIMFDLRRPPQNHTYYDTFVIQTLETVLNARVPQAMVFWLPDEDRANVQRRAPGMRQIYGRQGGNRTERPQFLNLPYQDLPLLDIKALHKDNVSVNLFVVNKPWLFSLLWCAGVDSVTTNDCQLLQQMRYPIWLITPQTYLIIWVITNCVSTMLLLWTFLLQRRFVKKRGKTGLETAVLLTRINNFMME.

At 1-38 (MAESPGCCSVWARCLHCLYSCHWRKCPRERMQTSKCDC) the chain is on the cytoplasmic side. A helical transmembrane segment spans residues 39–59 (IWFGLLFLTFLLSLSWLYIGL). Residues 60–85 (VLLNDLHNFNEFLFRRWGHWMDWSLA) are Extracellular-facing. A helical membrane pass occupies residues 86–106 (FLLVISLLVTYASLLLVLALL). At 107-121 (LRLCRQPLHLHSLHK) the chain is on the cytoplasmic side. Residues 122-142 (VLLLLIMLLVAAGLVGLDIQW) form a helical membrane-spanning segment. Residues 143–154 (QQEWHSLRVSLQ) lie on the Extracellular side of the membrane. A helical membrane pass occupies residues 155–175 (ATAPFLHIGAAAGIALLAWPV). The Cytoplasmic segment spans residues 176-188 (ADTFYRIHRRGPK). A helical transmembrane segment spans residues 189–209 (ILLLLLFFGVVLVIYLAPLCI). The Extracellular segment spans residues 210-490 (SSPCIMEPRD…PIWLITPQTY (281 aa)). A GP-PDE domain is found at 224-479 (PGLVGHRGAP…NDCQLLQQMR (256 aa)). Positions 256, 258, and 271 each coordinate a divalent metal cation. N442 carries N-linked (GlcNAc...) asparagine glycosylation. The helical transmembrane segment at 491-511 (LIIWVITNCVSTMLLLWTFLL) threads the bilayer. Residues 512–539 (QRRFVKKRGKTGLETAVLLTRINNFMME) lie on the Cytoplasmic side of the membrane.

It belongs to the glycerophosphoryl diester phosphodiesterase family. Requires Ca(2+) as cofactor.

It is found in the cell membrane. The protein localises to the cytoplasm. Its subcellular location is the cytoskeleton. The enzyme catalyses sn-glycero-3-phospho-1D-myo-inositol + H2O = 1D-myo-inositol 1-phosphate + glycerol + H(+). Functionally, has glycerophosphoinositol inositolphosphodiesterase activity and specifically hydrolyzes glycerophosphoinositol, with no activity for other substrates such as glycerophosphoinositol 4-phosphate, glycerophosphocholine, glycerophosphoethanolamine, and glycerophosphoserine. Accelerates the program of osteoblast differentiation and growth. May play a role in remodeling of the actin cytoskeleton. This chain is Glycerophosphoinositol inositolphosphodiesterase GDPD2 (GDPD2), found in Homo sapiens (Human).